A 510-amino-acid chain; its full sequence is MIWHVQNENFILDSTRIFMKAFHLLLFDGSLIFPECILIFGLILLLMIDSTSDQKDIPWLYFISSTSLVLSITALLFRWREEPMISFSGNFQTNNFNEIFQFLILLCSTLCIPLSVEYIECTEMAITEFLLFVLTATLGGMFLCGANDLITIFVAPECFSLCSYLLSGYTKKDVRSNEATMKYLLMGGASSSILVHGFSWLYGSSGGEIELQEIVNGLINTQMYNSPGISIALIFITVGIGFKLSPAPSHQWTPDVYEGSPTPVVAFLSVTSKVAASASATRIFDIPFYFSSNEWHLLLEILAILSMILGNLIAITQTSMKRMLAYSSIGQIGYVIIGIIVGDSNDGYASMITYMLFYISMNLGTFACIVLFGLRTGTDNIRDYAGLYTKDPFLALSLALCLLSLGGLPPLAGFFGKLYLFWCGWQAGLYFLVLIGLLTSVVSIYYYLKIIKLLMTGRNQEITPHVRNYRRSPLRSNNSIELSMIVCVIASTIPGISMNPIIAIAQDSLF.

Helical transmembrane passes span 24 to 44 (LLLFDGSLIFPECILIFGLIL), 57 to 77 (IPWLYFISSTSLVLSITALLF), 99 to 119 (IFQFLILLCSTLCIPLSVEYI), 124 to 144 (MAITEFLLFVLTATLGGMFLC), 149 to 169 (LITIFVAPECFSLCSYLLSGY), 183 to 203 (YLLMGGASSSILVHGFSWLYG), 227 to 247 (PGISIALIFITVGIGFKLSPA), 295 to 315 (WHLLLEILAILSMILGNLIAI), 323 to 343 (MLAYSSIGQIGYVIIGIIVGD), 354 to 374 (YMLFYISMNLGTFACIVLFGL), 395 to 415 (ALSLALCLLSLGGLPPLAGFF), 418 to 438 (LYLFWCGWQAGLYFLVLIGLL), and 484 to 504 (MIVCVIASTIPGISMNPIIAI).

This sequence belongs to the complex I subunit 2 family. As to quaternary structure, NDH is composed of at least 16 different subunits, 5 of which are encoded in the nucleus.

It localises to the plastid. Its subcellular location is the chloroplast thylakoid membrane. The enzyme catalyses a plastoquinone + NADH + (n+1) H(+)(in) = a plastoquinol + NAD(+) + n H(+)(out). The catalysed reaction is a plastoquinone + NADPH + (n+1) H(+)(in) = a plastoquinol + NADP(+) + n H(+)(out). NDH shuttles electrons from NAD(P)H:plastoquinone, via FMN and iron-sulfur (Fe-S) centers, to quinones in the photosynthetic chain and possibly in a chloroplast respiratory chain. The immediate electron acceptor for the enzyme in this species is believed to be plastoquinone. Couples the redox reaction to proton translocation, and thus conserves the redox energy in a proton gradient. In Solanum tuberosum (Potato), this protein is NAD(P)H-quinone oxidoreductase subunit 2 A, chloroplastic.